The chain runs to 149 residues: Deoxyuridine 5'-triphosphate nucleotidohydrolase (149 aa).

Residues 68–70, Asn-81, 85–87, and Lys-95 contribute to the substrate site; these read RSG and TVD.

This sequence belongs to the dUTPase family. Mg(2+) serves as cofactor.

The catalysed reaction is dUTP + H2O = dUMP + diphosphate + H(+). It participates in pyrimidine metabolism; dUMP biosynthesis; dUMP from dCTP (dUTP route): step 2/2. This enzyme is involved in nucleotide metabolism: it produces dUMP, the immediate precursor of thymidine nucleotides and it decreases the intracellular concentration of dUTP so that uracil cannot be incorporated into DNA. The polypeptide is Deoxyuridine 5'-triphosphate nucleotidohydrolase (Wolinella succinogenes (strain ATCC 29543 / DSM 1740 / CCUG 13145 / JCM 31913 / LMG 7466 / NCTC 11488 / FDC 602W) (Vibrio succinogenes)).